The sequence spans 305 residues: Ribosomal RNA small subunit methyltransferase H (305 aa).

S-adenosyl-L-methionine contacts are provided by residues 33-35, D52, D97, and Q104; that span reads GGH.

This sequence belongs to the methyltransferase superfamily. RsmH family.

It localises to the cytoplasm. It carries out the reaction cytidine(1402) in 16S rRNA + S-adenosyl-L-methionine = N(4)-methylcytidine(1402) in 16S rRNA + S-adenosyl-L-homocysteine + H(+). Functionally, specifically methylates the N4 position of cytidine in position 1402 (C1402) of 16S rRNA. The polypeptide is Ribosomal RNA small subunit methyltransferase H (Campylobacter lari (strain RM2100 / D67 / ATCC BAA-1060)).